A 347-amino-acid polypeptide reads, in one-letter code: UDP-N-acetylenolpyruvoylglucosamine reductase (347 aa).

Residues 23-197 form the FAD-binding PCMH-type domain; that stretch reads LPARAARLLR…LRVRFRLPQA (175 aa). The active site involves Arg174. The Proton donor role is filled by Ser247. Residue Glu343 is part of the active site.

This sequence belongs to the MurB family. FAD serves as cofactor.

It is found in the cytoplasm. The catalysed reaction is UDP-N-acetyl-alpha-D-muramate + NADP(+) = UDP-N-acetyl-3-O-(1-carboxyvinyl)-alpha-D-glucosamine + NADPH + H(+). It functions in the pathway cell wall biogenesis; peptidoglycan biosynthesis. Cell wall formation. This Azoarcus sp. (strain BH72) protein is UDP-N-acetylenolpyruvoylglucosamine reductase.